Reading from the N-terminus, the 384-residue chain is MVQVQRRTGGDKGAKGNRASSAPVRSRRMTQDDWSRTHPDDIFSVIEKTLVEDGYKWNGVKPGHCDWGKLKESGAIDNFRGTLEGELGKNCDLTCNAAAVKLDTLQKVKMSSDWTARVGIVLGAPGVGKSTSIKNLLDKFGAKHKMVLCLPFSQLLEGVFAGRLDTFLVDDLFCRSVGYGKYNTMLVDEVTRVHMCEILVLAGHLGVKNVICFGDPAQGLNYKAGSAVNYNFPIIAECYASRRFGKATADLINSSNGGGKPVVGNNEVKDSWTFEELCGKILDMSTVLVATRETQKFLLEDNIESILYSDAHGQTYDVVTIILEDEFDDAAICDPNVRAVLLTRARKGGMIKMGPNIAARFKNGDFNSRGVSKSCTGDTFCEDR.

Residues 1–36 (MVQVQRRTGGDKGAKGNRASSAPVRSRRMTQDDWSR) form a disordered region. A (+)RNA virus helicase ATP-binding domain is found at 88–238 (GKNCDLTCNA…NYNFPIIAEC (151 aa)). 123–130 (GAPGVGKS) lines the ATP pocket. The (+)RNA virus helicase C-terminal domain occupies 239-384 (YASRRFGKAT…CTGDTFCEDR (146 aa)).

This sequence belongs to the virgaviridae/benyvirus TGB1 movement protein family. As to quaternary structure, homooligomer. Interacts with movement protein TGB3.

It is found in the host cell junction. It localises to the host plasmodesma. Its function is as follows. Transports viral genome to neighboring plant cells directly through plasmodesmata, without any budding. The movement protein allows efficient cell to cell propagation, by bypassing the host cell wall barrier. Engages in homologous interactions leading to the formation of a ribonucleoprotein complex containing viral genomic and messenger RNAs (vRNPs). TGBp2 and TGBp3 are necessary for intracellular delivery of TGBp1-containing vRNPs to plasmodesmata. This Beet necrotic yellow vein virus (isolate Japan/S) (BNYVV) protein is Movement protein TGB1.